The chain runs to 285 residues: Bifunctional protein FolD (285 aa).

NADP(+)-binding positions include 166–168 and isoleucine 232; that span reads GAS.

Belongs to the tetrahydrofolate dehydrogenase/cyclohydrolase family. Homodimer.

The enzyme catalyses (6R)-5,10-methylene-5,6,7,8-tetrahydrofolate + NADP(+) = (6R)-5,10-methenyltetrahydrofolate + NADPH. The catalysed reaction is (6R)-5,10-methenyltetrahydrofolate + H2O = (6R)-10-formyltetrahydrofolate + H(+). It participates in one-carbon metabolism; tetrahydrofolate interconversion. The NAD(+)-dependent dehydrogenase is activated by inorganic phosphate. Catalyzes the oxidation of 5,10-methylenetetrahydrofolate to 5,10-methenyltetrahydrofolate and then the hydrolysis of 5,10-methenyltetrahydrofolate to 10-formyltetrahydrofolate. This Photobacterium phosphoreum protein is Bifunctional protein FolD.